Consider the following 159-residue polypeptide: Prs ADP-ribosylating antitoxin (159 aa).

The tract at residues 99–159 is sufficient to neutralize toxin; it reads EDMVEESGET…LAQIQSGAFA (61 aa).

Belongs to the MbcA/ParS/Xre antitoxin family. As to quaternary structure, forms heterotetrameric ParS(2)-ParT(2) complexes. The 2 antitoxin fragments do not make contact in the crystal structure.

Antitoxin component of a type II toxin-antitoxin (TA) system. Neutralizes the bacteriostatic effect of cognate toxin ParT by inserting into its active site. The polypeptide is Prs ADP-ribosylating antitoxin (Sphingobium sp. (strain YBL2)).